A 574-amino-acid polypeptide reads, in one-letter code: DNA polymerase alpha subunit B (574 aa).

It belongs to the DNA polymerase alpha subunit B family. As to quaternary structure, component of the alpha DNA polymerase complex (also known as the alpha DNA polymerase-primase complex) consisting of four subunits: the catalytic subunit pol1, the accessory subunit spb70/pol12, and the primase complex subunits spp1/pri1 and spp2/pri2 respectively. Interacts with orc1. Interacts with orc2; the interaction occurs on the chromatin, is stable thoughout the cell cycle and is independent from spb70 role in the alpha DNA polymerase complex. Post-translationally, phosphorylated in a cell cycle-dependent manner.

It localises to the nucleus. The protein resides in the chromosome. Accessory subunit of the DNA polymerase alpha complex (also known as the alpha DNA polymerase-primase complex) which plays an essential role in the initiation of DNA synthesis. During the S phase of the cell cycle, the DNA polymerase alpha complex (composed of a catalytic subunit pol1, an accessory subunit spb70/pol12 and two primase subunits, the catalytic subunit spp1/pri1 and the regulatory subunit spp2/pri2) is recruited to DNA at the replicative forks. The primase subunit of the polymerase alpha complex initiates DNA synthesis by oligomerising short RNA primers on both leading and lagging strands. This is DNA polymerase alpha subunit B from Schizosaccharomyces pombe (strain 972 / ATCC 24843) (Fission yeast).